The following is a 261-amino-acid chain: Ribosome-inactivating protein PD-L1/PD-L2 (261 aa).

N-linked (GlcNAc...) asparagine; in PD-L1 and PD-L2 glycans are attached at residues N10 and N43. 2 cysteine pairs are disulfide-bonded: C34–C258 and C84–C105. Residue Y72 is part of the active site. V73 lines the substrate pocket. S120 is a substrate binding site. Residues Y122, E175, and R178 contribute to the active site. Position 178 (R178) interacts with substrate. N255 carries N-linked (GlcNAc...) asparagine; in PD-L1 glycosylation.

The protein belongs to the ribosome-inactivating protein family. Type 1 RIP subfamily. N-glycosylated. Loss of glycosylation does not affect DNA-cleaving ability. Loss of glycosylation does not affect protein synthesis inhibition, but increases adenine polynucleotide glycosidase activity likely as a consequence of the increased accessibility of substrates to the active site pocket in the absence of glycosylation. As to expression, expressed in leaves (at protein level).

It carries out the reaction Endohydrolysis of the N-glycosidic bond at one specific adenosine on the 28S rRNA.. In terms of biological role, inhibits protein synthesis. Has adenine polynucleotide glycosidase activity on herring sperm (hs)DNA and poly(A) substrates. Cleaves supercoiled pBR322 dsDNA. The sequence is that of Ribosome-inactivating protein PD-L1/PD-L2 from Phytolacca dioica (Bella sombra tree).